The chain runs to 603 residues: Aspartate--tRNA(Asp/Asn) ligase (603 aa).

The segment at 205–208 (QLFK) is aspartate. Arg227 is an L-aspartate binding site. Residues 227-229 (RDE) and Gln236 each bind ATP. His463 serves as a coordination point for L-aspartate. Residue Glu497 participates in ATP binding. Residue Arg504 coordinates L-aspartate. 549–552 (GMDR) lines the ATP pocket.

It belongs to the class-II aminoacyl-tRNA synthetase family. Type 1 subfamily. As to quaternary structure, homodimer.

The protein localises to the cytoplasm. It carries out the reaction tRNA(Asx) + L-aspartate + ATP = L-aspartyl-tRNA(Asx) + AMP + diphosphate. Functionally, aspartyl-tRNA synthetase with relaxed tRNA specificity since it is able to aspartylate not only its cognate tRNA(Asp) but also tRNA(Asn). Reaction proceeds in two steps: L-aspartate is first activated by ATP to form Asp-AMP and then transferred to the acceptor end of tRNA(Asp/Asn). The protein is Aspartate--tRNA(Asp/Asn) ligase of Anaeromyxobacter dehalogenans (strain 2CP-C).